The following is a 389-amino-acid chain: MAAGKRDYYEVLGISKNASSQDIKRAFRKLAMQYHPDRHKAENETTQKQNEEKFKEVNEAYEVLSDEEKRKLYDQFGHEGLNASGFHEAGFNPFDIFNSVFGEGFSFGMDGDSPFDFIFNRSKKRQQQIVVPYNLDIALVIEINFFEMTNGCNKTIKYERKVSCHSCNGFGAEGGESGLDLCKDCNGNGFVIKNQRSIFGTIQSQVLCSTCNGQGKQIKVKCKTCRSNKYTVTNQIKEINIPAGMYSGEALVDESGGNEFKGHYGKLIIQVNVLASKIFKRSDNNVIANVLVDPMVAIVGGVIELPTLEGIKEFNIRPGTKSGEQIVIPNGGIKFSKSFKRKAGDLIIIISYARPCEYTNLELKKLREFIKPNQEVKQYLNTLKNEYKT.

Positions 5–79 constitute a J domain; the sequence is KRDYYEVLGI…RKLYDQFGHE (75 aa). The segment at 151–234 adopts a CR-type zinc-finger fold; that stretch reads GCNKTIKYER…CRSNKYTVTN (84 aa). The Zn(2+) site is built by C164, C167, C182, C185, C208, C211, C222, and C225. 4 CXXCXGXG motif repeats span residues 164–171, 182–189, 208–215, and 222–229; these read CHSCNGFG, CKDCNGNG, CSTCNGQG, and CKTCRSNK.

Belongs to the DnaJ family. In terms of assembly, homodimer. Zn(2+) is required as a cofactor.

It localises to the cytoplasm. Functionally, participates actively in the response to hyperosmotic and heat shock by preventing the aggregation of stress-denatured proteins and by disaggregating proteins, also in an autonomous, DnaK-independent fashion. Unfolded proteins bind initially to DnaJ; upon interaction with the DnaJ-bound protein, DnaK hydrolyzes its bound ATP, resulting in the formation of a stable complex. GrpE releases ADP from DnaK; ATP binding to DnaK triggers the release of the substrate protein, thus completing the reaction cycle. Several rounds of ATP-dependent interactions between DnaJ, DnaK and GrpE are required for fully efficient folding. Also involved, together with DnaK and GrpE, in the DNA replication of plasmids through activation of initiation proteins. The chain is Chaperone protein DnaJ from Mycoplasma genitalium (strain ATCC 33530 / DSM 19775 / NCTC 10195 / G37) (Mycoplasmoides genitalium).